Here is a 171-residue protein sequence, read N- to C-terminus: uncharacterized protein (171 aa).

The 134-residue stretch at 33-166 folds into the HTH marR-type domain; sequence AISIATNLYR…LTGLLRKVAD (134 aa). The H-T-H motif DNA-binding region spans 80 to 103; the sequence is TRKIAELSGISTATASNVIKTLEK.

This is an uncharacterized protein from Bacillus subtilis (strain 168).